The following is a 483-amino-acid chain: HSPB1-associated protein 1 (483 aa).

A disordered region spans residues 1–26; it reads MAAGCEGIAPPTLGERTVGEEGEPVK. The segment at 88–208 is interaction with HSPB1; the sequence is ETECSYVDAT…EDTPFLYPTR (121 aa). The JmjC domain occupies 124 to 288; that stretch reads WAYADYKYFV…HLARVEEAIT (165 aa). Residues 388-416 are disordered; the sequence is LIPVTPASEERGGALEGDSEESVSSNGGH.

As to quaternary structure, interacts with CRYAB and HSPB1.

The protein localises to the cytoplasm. In terms of biological role, may play a role in cellular stress response. This Mus musculus (Mouse) protein is HSPB1-associated protein 1 (Hspbap1).